A 144-amino-acid polypeptide reads, in one-letter code: tRNA-specific adenosine deaminase (144 aa).

The region spanning 1-116 (MEQALKQAGI…SNLRYFNSSV (116 aa)) is the CMP/dCMP-type deaminase domain. His-48 contributes to the Zn(2+) binding site. Glu-50 acts as the Proton donor in catalysis. 2 residues coordinate Zn(2+): Cys-78 and Cys-81.

Belongs to the cytidine and deoxycytidylate deaminase family. As to quaternary structure, homodimer. Zn(2+) is required as a cofactor.

It catalyses the reaction adenosine(34) in tRNA + H2O + H(+) = inosine(34) in tRNA + NH4(+). Catalyzes the deamination of adenosine to inosine at the wobble position 34 of tRNA(Arg2). The protein is tRNA-specific adenosine deaminase of Rickettsia felis (strain ATCC VR-1525 / URRWXCal2) (Rickettsia azadi).